The chain runs to 254 residues: 4-hydroxy-tetrahydrodipicolinate reductase (254 aa).

7-12 (GASGRI) provides a ligand contact to NAD(+). Arg35 lines the NADP(+) pocket. Residues 91–93 (GTT) and 115–118 (AHNM) contribute to the NAD(+) site. His147 acts as the Proton donor/acceptor in catalysis. Position 148 (His148) interacts with (S)-2,3,4,5-tetrahydrodipicolinate. Lys151 serves as the catalytic Proton donor. (S)-2,3,4,5-tetrahydrodipicolinate is bound at residue 157-158 (GT).

It belongs to the DapB family.

Its subcellular location is the cytoplasm. The catalysed reaction is (S)-2,3,4,5-tetrahydrodipicolinate + NAD(+) + H2O = (2S,4S)-4-hydroxy-2,3,4,5-tetrahydrodipicolinate + NADH + H(+). The enzyme catalyses (S)-2,3,4,5-tetrahydrodipicolinate + NADP(+) + H2O = (2S,4S)-4-hydroxy-2,3,4,5-tetrahydrodipicolinate + NADPH + H(+). Its pathway is amino-acid biosynthesis; L-lysine biosynthesis via DAP pathway; (S)-tetrahydrodipicolinate from L-aspartate: step 4/4. Functionally, catalyzes the conversion of 4-hydroxy-tetrahydrodipicolinate (HTPA) to tetrahydrodipicolinate. This Helicobacter pylori (strain HPAG1) protein is 4-hydroxy-tetrahydrodipicolinate reductase.